Reading from the N-terminus, the 336-residue chain is Holliday junction branch migration complex subunit RuvB (336 aa).

The tract at residues 4–184 is large ATPase domain (RuvB-L); it reads ADRLISAASN…FGIVQRLEFY (181 aa). ATP is bound by residues I23, R24, G65, K68, T69, T70, 131–133, R174, Y184, and R221; that span reads EDY. Residue T69 participates in Mg(2+) binding. The tract at residues 185-255 is small ATPAse domain (RuvB-S); the sequence is QVPDLQYIVG…VAAQALDMLN (71 aa). The segment at 258–336 is head domain (RuvB-H); it reads AEGFDYMDRK…HFGITPPEMP (79 aa). R294, R313, and R318 together coordinate DNA.

This sequence belongs to the RuvB family. Homohexamer. Forms an RuvA(8)-RuvB(12)-Holliday junction (HJ) complex. HJ DNA is sandwiched between 2 RuvA tetramers; dsDNA enters through RuvA and exits via RuvB. An RuvB hexamer assembles on each DNA strand where it exits the tetramer. Each RuvB hexamer is contacted by two RuvA subunits (via domain III) on 2 adjacent RuvB subunits; this complex drives branch migration. In the full resolvosome a probable DNA-RuvA(4)-RuvB(12)-RuvC(2) complex forms which resolves the HJ.

The protein localises to the cytoplasm. The catalysed reaction is ATP + H2O = ADP + phosphate + H(+). In terms of biological role, the RuvA-RuvB-RuvC complex processes Holliday junction (HJ) DNA during genetic recombination and DNA repair, while the RuvA-RuvB complex plays an important role in the rescue of blocked DNA replication forks via replication fork reversal (RFR). RuvA specifically binds to HJ cruciform DNA, conferring on it an open structure. The RuvB hexamer acts as an ATP-dependent pump, pulling dsDNA into and through the RuvAB complex. RuvB forms 2 homohexamers on either side of HJ DNA bound by 1 or 2 RuvA tetramers; 4 subunits per hexamer contact DNA at a time. Coordinated motions by a converter formed by DNA-disengaged RuvB subunits stimulates ATP hydrolysis and nucleotide exchange. Immobilization of the converter enables RuvB to convert the ATP-contained energy into a lever motion, pulling 2 nucleotides of DNA out of the RuvA tetramer per ATP hydrolyzed, thus driving DNA branch migration. The RuvB motors rotate together with the DNA substrate, which together with the progressing nucleotide cycle form the mechanistic basis for DNA recombination by continuous HJ branch migration. Branch migration allows RuvC to scan DNA until it finds its consensus sequence, where it cleaves and resolves cruciform DNA. This is Holliday junction branch migration complex subunit RuvB from Enterobacter sp. (strain 638).